Consider the following 967-residue polypeptide: MNSFEKKILILKKDDKDSFIALVKQLSTKEKQILFDTIDSRIRKLQTIYLNKPFNLKFLQTFIKEDSDEDDDDEEDEEDEEDSDEEEDDDVVEDDNTKDIGKSRDSDKSIKGKEKGKEKEKEEIEIIEQRYETKVIPKKPIYKDQQQELLQQLQLQQLQQKPISPIKDNSGVSYNTSFSSLSSLSMSNSTSSSLLSTSLLSASLLSASSSGLSTSSLSSSINNSSNNNSNISSSPLSSSPLTLSSSSSSSSPLQRIQSIQNLIRSNSLRTSLSSSSSLLPNLIQLQQQQLPPPPPSQQQQQQQQQQQQQNNSMLQQSNNNNISPRTQLLNNTTTLLPNNGLEEIFNDSNKIGEGGQCSIYKYMGTAMKRFKPSLSSSLISKEFENEVLILERLNHPNIVKIITYSTIERIILLEFIDGNSLDKYPSQSLPLSPSSSLPNPLKVIQDFQQIVDAMIYLHNEIGIIHFDLKPSNILKNSKNNKLKLIDFGISKFLNNNNQNNNNNSLNMGSYRYSPPELLCNNNQNNNLINKSVDVFSFGIMLWECLNWTLPYESLSREQVKQIKTDMERESHLPLDHLPKGIQDLIRLCWKHDPSIRPSFIEIRSRLSEIILNNIPSLNGRQFWISSSKYLQQNDDSLINNNNNNNQNNNNQNNNNNNNNNNNNNNNNKDETTSIIIYESIPWLKFKTFLSNHLNIYRQSSTSNSNSSFNLNNNSSRNNQRQQQQQNNRNRSVYNNNYNNNNNNIINNNNNNINNNRNRNYNAYYEYIFDYIRYILKVIDEKRDEVSVIEFSRFCTFFSPLISSSLFRSIQIFCDIPGLYGYCLKKDLILSSSMITLMSKIGYLIFIDPNNINQLFLKMKAPTSSSSNKNNNNNNNDNNNPSNFIDFTIRVKIGNYNQRIFQCHGHTSSSLSGLIKELQPLIDNNNSGNSSGSSSSKKSNSGFLYQKTPISEIKDRHINGSYLNQNYK.

Disordered stretches follow at residues 65–122 (EDSD…KEKE), 215–251 (SSLS…SSSS), and 287–326 (QQQL…SPRT). Positions 66 to 94 (DSDEDDDDEEDEEDEEDSDEEEDDDVVED) are enriched in acidic residues. A compositionally biased stretch (basic and acidic residues) spans 95–122 (DNTKDIGKSRDSDKSIKGKEKGKEKEKE). Low complexity predominate over residues 297-326 (QQQQQQQQQQQQQNNSMLQQSNNNNISPRT). A Protein kinase domain is found at 345–610 (FNDSNKIGEG…EIRSRLSEII (266 aa)). ATP-binding positions include 351–359 (IGEGGQCSI) and K368. Residue D467 is the Proton acceptor of the active site. Disordered stretches follow at residues 634–667 (DDSL…NNNN), 700–752 (STSN…NNNI), and 862–882 (TSSS…NPSN). The segment covering 639 to 666 (NNNNNNNQNNNNQNNNNNNNNNNNNNNN) has biased composition (low complexity). Residues 863-882 (SSSSNKNNNNNNNDNNNPSN) show a composition bias toward low complexity.

The protein belongs to the protein kinase superfamily. TKL Ser/Thr protein kinase family.

It catalyses the reaction L-seryl-[protein] + ATP = O-phospho-L-seryl-[protein] + ADP + H(+). The enzyme catalyses L-threonyl-[protein] + ATP = O-phospho-L-threonyl-[protein] + ADP + H(+). The protein is Probable serine/threonine-protein kinase DDB_G0290621 of Dictyostelium discoideum (Social amoeba).